Here is a 116-residue protein sequence, read N- to C-terminus: NADH-ubiquinone oxidoreductase chain 3 (116 aa).

The next 3 helical transmembrane spans lie at 3–23 (LIMTILTITVALSLILATVSF), 56–76 (FFLVAILFLLFDLEIALLLPL), and 87–107 (GTFFWATTVLILLTLGLIYEW).

The protein belongs to the complex I subunit 3 family.

The protein resides in the mitochondrion membrane. The catalysed reaction is a ubiquinone + NADH + 5 H(+)(in) = a ubiquinol + NAD(+) + 4 H(+)(out). Functionally, core subunit of the mitochondrial membrane respiratory chain NADH dehydrogenase (Complex I) that is believed to belong to the minimal assembly required for catalysis. Complex I functions in the transfer of electrons from NADH to the respiratory chain. The immediate electron acceptor for the enzyme is believed to be ubiquinone. The chain is NADH-ubiquinone oxidoreductase chain 3 (MT-ND3) from Cyprinus carpio (Common carp).